The primary structure comprises 357 residues: MRPPPALALAGLCLLALPAAAASYFGLTGREVLTPFPGLGTAAAPAQGGAHLKQCDLLKLSRRQKQLCRREPGLAETLRDAAHLGLLECQFQFRHERWNCSLEGRMGLLKRGFKETAFLYAVSSAALTHTLARACSAGRMERCTCDDSPGLESRQAWQWGVCGDNLKYSTKFLSNFLGSKRGNKDLRARADAHNTHVGIKAVKSGLRTTCKCHGVSGSCAVRTCWKQLSPFRETGQVLKLRYDSAVKVSSATNEALGRLELWAPARQGSLTKGLAPRSGDLVYMEDSPSFCRPSKYSPGTAGRVCSREASCSSLCCGRGYDTQSRLVAFSCHCQVQWCCYVECQQCVQEELVYTCKH.

A signal peptide spans 1–22 (MRPPPALALAGLCLLALPAAAA). Cystine bridges form between Cys-89–Cys-100, Cys-135–Cys-143, Cys-145–Cys-162, Cys-210–Cys-224, Cys-212–Cys-219, Cys-291–Cys-316, Cys-305–Cys-311, Cys-315–Cys-355, Cys-331–Cys-346, Cys-333–Cys-343, and Cys-338–Cys-339. Residue Asn-99 is glycosylated (N-linked (GlcNAc...) asparagine). Ser-216 is lipidated: O-palmitoleoyl serine; by PORCN.

Belongs to the Wnt family. As to quaternary structure, forms a soluble 1:1 complex with AFM; this prevents oligomerization and is required for prolonged biological activity. The complex with AFM may represent the physiological form in body fluids. Component of the Wnt-Fzd-LRP5-LRP6 signaling complex that contains a WNT protein, a FZD protein and LRP5 or LRP6. Interacts directly in the complex with LRP6. Interacts with PKD1 (via extracellular domain). Palmitoleoylation is required for efficient binding to frizzled receptors. Depalmitoleoylation leads to Wnt signaling pathway inhibition. As to expression, moderately expressed in fetal kidney and adult kidney. Also found in brain.

It is found in the secreted. It localises to the extracellular space. The protein resides in the extracellular matrix. Functionally, ligand for members of the frizzled family of seven transmembrane receptors. Functions in the canonical Wnt/beta-catenin signaling pathway. Required for normal embryonic kidney development, and for normal development of the urogenital tract, including uterus and part of the oviduct and the upper vagina in females, and epididymis and vas deferens in males. Activates a signaling cascade in the metanephric mesenchyme that induces tubulogenesis. Acts upstream of WNT4 in the signaling pathways that mediate development of kidney tubules and the Muellerian ducts. Plays a role in cranofacial development and is required for normal fusion of the palate during embryonic development. The polypeptide is Protein Wnt-9b (WNT9B) (Homo sapiens (Human)).